A 341-amino-acid polypeptide reads, in one-letter code: Biotin synthase (341 aa).

The Radical SAM core domain maps to 40 to 267 (AEIQVSTLLS…RSMVRLSAGR (228 aa)). Residues cysteine 55, cysteine 59, and cysteine 62 each coordinate [4Fe-4S] cluster. Cysteine 99, cysteine 130, cysteine 190, and arginine 262 together coordinate [2Fe-2S] cluster.

This sequence belongs to the radical SAM superfamily. Biotin synthase family. Homodimer. It depends on [4Fe-4S] cluster as a cofactor. [2Fe-2S] cluster serves as cofactor.

The enzyme catalyses (4R,5S)-dethiobiotin + (sulfur carrier)-SH + 2 reduced [2Fe-2S]-[ferredoxin] + 2 S-adenosyl-L-methionine = (sulfur carrier)-H + biotin + 2 5'-deoxyadenosine + 2 L-methionine + 2 oxidized [2Fe-2S]-[ferredoxin]. Its pathway is cofactor biosynthesis; biotin biosynthesis; biotin from 7,8-diaminononanoate: step 2/2. In terms of biological role, catalyzes the conversion of dethiobiotin (DTB) to biotin by the insertion of a sulfur atom into dethiobiotin via a radical-based mechanism. The chain is Biotin synthase from Xylella fastidiosa (strain 9a5c).